The primary structure comprises 121 residues: Small ribosomal subunit protein uS13 (121 aa).

The disordered stretch occupies residues 93 to 121 (RGLPVRGQNTKNNARTRKGKATAIAGKKK). Positions 106 to 121 (ARTRKGKATAIAGKKK) are enriched in basic residues.

This sequence belongs to the universal ribosomal protein uS13 family. As to quaternary structure, part of the 30S ribosomal subunit. Forms a loose heterodimer with protein S19. Forms two bridges to the 50S subunit in the 70S ribosome.

Its function is as follows. Located at the top of the head of the 30S subunit, it contacts several helices of the 16S rRNA. In the 70S ribosome it contacts the 23S rRNA (bridge B1a) and protein L5 of the 50S subunit (bridge B1b), connecting the 2 subunits; these bridges are implicated in subunit movement. Contacts the tRNAs in the A and P-sites. In Streptococcus uberis (strain ATCC BAA-854 / 0140J), this protein is Small ribosomal subunit protein uS13.